We begin with the raw amino-acid sequence, 296 residues long: Glycine--tRNA ligase alpha subunit (296 aa).

This sequence belongs to the class-II aminoacyl-tRNA synthetase family. As to quaternary structure, tetramer of two alpha and two beta subunits.

It localises to the cytoplasm. The enzyme catalyses tRNA(Gly) + glycine + ATP = glycyl-tRNA(Gly) + AMP + diphosphate. The polypeptide is Glycine--tRNA ligase alpha subunit (Listeria welshimeri serovar 6b (strain ATCC 35897 / DSM 20650 / CCUG 15529 / CIP 8149 / NCTC 11857 / SLCC 5334 / V8)).